Consider the following 324-residue polypeptide: G patch domain-containing protein 4 (324 aa).

Disordered regions lie at residues 1–30 and 123–324; these read MSASSVKKSQGMKFAEEQMHKHGWKEGKGL and LSGG…NKSE. Residues 11-57 enclose the G-patch domain; sequence GMKFAEEQMHKHGWKEGKGLGRRENGICEAIKVKVKCDHAGVGHNSA. Basic and acidic residues predominate over residues 14-30; sequence FAEEQMHKHGWKEGKGL. The segment covering 131-141 has biased composition (low complexity); sequence KEPSSSESSDS. The span at 186 to 215 shows a compositional bias: basic and acidic residues; it reads SRLEEQEREFLAKYGKKEQKNKERDEKLER. The segment covering 244-253 has biased composition (basic residues); that stretch reads HKKKKKKRKR. The span at 254–270 shows a compositional bias: basic and acidic residues; it reads ADSERKEESQENGHEEE. Over residues 296-309 the composition is skewed to polar residues; sequence PSTQEEQPTESSDF. Positions 312 to 324 are enriched in basic residues; sequence KPKKKKKKKNKSE.

The protein is G patch domain-containing protein 4 (gpatch4) of Xenopus laevis (African clawed frog).